The chain runs to 341 residues: Transcription factor ETV7 (341 aa).

The PNT domain occupies 33–117 (NLLGEGGICK…ELLQYIKTQR (85 aa)). Positions 224 to 305 (RLLWDYVYQL…PGQKLLFRFL (82 aa)) form a DNA-binding region, ETS. The interval 315–341 (KHSHLEPLESQEQDRIEFKDKRPEISP) is disordered.

It belongs to the ETS family. As to expression, expressed in hematopoietic tissues.

It localises to the nucleus. Functionally, transcriptional repressor; binds to the DNA sequence 5'-CCGGAAGT-3'. Isoform A does not seem to have a repressor activity. Isoform C does not seem to have a repressor activity. The sequence is that of Transcription factor ETV7 (ETV7) from Homo sapiens (Human).